Consider the following 241-residue polypeptide: Small ribosomal subunit protein uS3 (241 aa).

A KH type-2 domain is found at V39–A109. Residues A213 to E241 are disordered.

The protein belongs to the universal ribosomal protein uS3 family. Part of the 30S ribosomal subunit. Forms a tight complex with proteins S10 and S14.

Binds the lower part of the 30S subunit head. Binds mRNA in the 70S ribosome, positioning it for translation. This Acaryochloris marina (strain MBIC 11017) protein is Small ribosomal subunit protein uS3.